Reading from the N-terminus, the 175-residue chain is Gamma-crystallin A (175 aa).

Beta/gamma crystallin 'Greek key' domains are found at residues 2 to 40 (GKIT…RVDV) and 41 to 83 (HSWF…RLIP). The connecting peptide stretch occupies residues 84 to 88 (QHTGT). Beta/gamma crystallin 'Greek key' domains follow at residues 89 to 129 (FRMR…RVLE) and 130 to 172 (GSWV…RRVM).

The protein belongs to the beta/gamma-crystallin family.

Crystallins are the dominant structural components of the vertebrate eye lens. The sequence is that of Gamma-crystallin A (CRYGA) from Bos taurus (Bovine).